Reading from the N-terminus, the 362-residue chain is Phosphoserine aminotransferase (362 aa).

Residue Arg-43 participates in L-glutamate binding. Residues 77 to 78, Trp-103, Thr-153, Asp-173, and Gln-196 each bind pyridoxal 5'-phosphate; that span reads AT. At Lys-197 the chain carries N6-(pyridoxal phosphate)lysine. Position 238 to 239 (238 to 239) interacts with pyridoxal 5'-phosphate; it reads NT.

This sequence belongs to the class-V pyridoxal-phosphate-dependent aminotransferase family. SerC subfamily. Homodimer. Pyridoxal 5'-phosphate is required as a cofactor.

It localises to the cytoplasm. It catalyses the reaction O-phospho-L-serine + 2-oxoglutarate = 3-phosphooxypyruvate + L-glutamate. The catalysed reaction is 4-(phosphooxy)-L-threonine + 2-oxoglutarate = (R)-3-hydroxy-2-oxo-4-phosphooxybutanoate + L-glutamate. It functions in the pathway amino-acid biosynthesis; L-serine biosynthesis; L-serine from 3-phospho-D-glycerate: step 2/3. Its pathway is cofactor biosynthesis; pyridoxine 5'-phosphate biosynthesis; pyridoxine 5'-phosphate from D-erythrose 4-phosphate: step 3/5. In terms of biological role, catalyzes the reversible conversion of 3-phosphohydroxypyruvate to phosphoserine and of 3-hydroxy-2-oxo-4-phosphonooxybutanoate to phosphohydroxythreonine. The chain is Phosphoserine aminotransferase from Acidithiobacillus ferrooxidans (strain ATCC 23270 / DSM 14882 / CIP 104768 / NCIMB 8455) (Ferrobacillus ferrooxidans (strain ATCC 23270)).